Consider the following 639-residue polypeptide: 3D-(3,5/4)-trihydroxycyclohexane-1,2-dione hydrolase (639 aa).

Thiamine diphosphate is bound at residue Glu62. The tract at residues 438–518 (SLPGDLQRMW…INILLFDNCG (81 aa)) is thiamine pyrophosphate binding. Positions 489 and 516 each coordinate Mg(2+).

Belongs to the TPP enzyme family. Mg(2+) is required as a cofactor. Thiamine diphosphate serves as cofactor.

The enzyme catalyses 3D-3,5/4-trihydroxycyclohexane-1,2-dione + H2O = 5-deoxy-D-glucuronate + H(+). The protein operates within polyol metabolism; myo-inositol degradation into acetyl-CoA; acetyl-CoA from myo-inositol: step 3/7. Involved in the cleavage of the C1-C2 bond of 3D-(3,5/4)-trihydroxycyclohexane-1,2-dione (THcHDO) to yield 5-deoxy-glucuronate (5DG). This is 3D-(3,5/4)-trihydroxycyclohexane-1,2-dione hydrolase from Clostridium perfringens (strain ATCC 13124 / DSM 756 / JCM 1290 / NCIMB 6125 / NCTC 8237 / Type A).